The primary structure comprises 109 residues: Mitochondrial pyruvate carrier 1 (109 aa).

Residue A2 is modified to N-acetylalanine. At 2–20 (AGALVRKAADYVRSKDFRD) the chain is on the mitochondrial matrix side. The chain crosses the membrane as a helical span at residues 21–41 (YLMSTHFWGPVANWGLPIAAI). The Mitochondrial intermembrane portion of the chain corresponds to 42–52 (NDMKKSPEIIS). A helical transmembrane segment spans residues 53–71 (GRMTFALCCYSLTFMRFAY). Residue K72 is modified to N6-acetyllysine. Residues 72–109 (KVQPRNWLLFACHVTNEVAQLIQGGRLINYEMSKRPSA) lie on the Mitochondrial matrix side of the membrane.

Belongs to the mitochondrial pyruvate carrier (MPC) (TC 2.A.105) family. In terms of assembly, homodimer. Forms heterodimer with MPC2. The heterodimer is the more stable and dominant form.

Its subcellular location is the mitochondrion inner membrane. The catalysed reaction is pyruvate(out) + H(+)(out) = pyruvate(in) + H(+)(in). Functionally, mediates the uptake of pyruvate into mitochondria. The polypeptide is Mitochondrial pyruvate carrier 1 (Mpc1) (Mus musculus (Mouse)).